The sequence spans 560 residues: Arginine--tRNA ligase (560 aa).

Residues Ala122–His132 carry the 'HIGH' region motif.

It belongs to the class-I aminoacyl-tRNA synthetase family.

It is found in the cytoplasm. It catalyses the reaction tRNA(Arg) + L-arginine + ATP = L-arginyl-tRNA(Arg) + AMP + diphosphate. The sequence is that of Arginine--tRNA ligase from Methanosphaera stadtmanae (strain ATCC 43021 / DSM 3091 / JCM 11832 / MCB-3).